Consider the following 312-residue polypeptide: MCILMATRAHPDYELILISNRDEFLARKTHATCWHNNDFILSPYDLAKTSAEKQIFGTWSGINKEGKLATILNLKLDNEQNNTKSRSRGLLPFIFLSIHKADFEDWDNYKKFEGHYDGLKSTGDFNFFYGDVIKKQYKVIDSLGRTFDVLSSTCRKDLDSYMVVSNGKFYDSSSIPGQAWEKVKVARDSLENLVLENIESDEEKIISSCFQLASKSSLPSTISNPDVLQMVDPNVTMNTIYVPPLRRPPRDDLGASIPDGDYYGTRSQIVLLVSKDSTRVTFIERVLYSSDEDVRKYSVTSPKEEKRFKFKL.

This is an uncharacterized protein from Saccharomyces cerevisiae (strain ATCC 204508 / S288c) (Baker's yeast).